Consider the following 193-residue polypeptide: MALTQLGNHPKEELALVEIATAILSEHKTVMPFSSLVEEIQDFLAVDAETFQSRLSQFYTDLNTDGSFISLGNNEWGLRAWYPVDAIDESIHEIDDDDDAPKRKKAAKKVNVFADSAADDDVIDYNDDDPEDEDFGEVTEEETDVDVDDSEVEVEDDEEEEIAVGDDETIDDNLTELTGTNDLDDLSDGDIEK.

Residues 14–81 form the HTH HARE-type domain; it reads LALVEIATAI…GNNEWGLRAW (68 aa). Acidic residues-rich tracts occupy residues 119 to 174 and 182 to 193; these read DDDV…DDNL and DLDDLSDGDIEK. The tract at residues 119 to 193 is disordered; sequence DDDVIDYNDD…DDLSDGDIEK (75 aa).

This sequence belongs to the RpoE family. RNAP is composed of a core of 2 alpha, a beta and a beta' subunits. The core is associated with a delta subunit and one of several sigma factors.

Its function is as follows. Participates in both the initiation and recycling phases of transcription. In the presence of the delta subunit, RNAP displays an increased specificity of transcription, a decreased affinity for nucleic acids, and an increased efficiency of RNA synthesis because of enhanced recycling. The polypeptide is Probable DNA-directed RNA polymerase subunit delta (Leuconostoc citreum (strain KM20)).